Reading from the N-terminus, the 266-residue chain is Orotidine 5'-phosphate decarboxylase (266 aa).

Substrate contacts are provided by residues aspartate 38, 60–62, 92–101, tyrosine 218, and arginine 236; these read KTH and DRKFADIGNT. Lysine 94 (proton donor) is an active-site residue.

It belongs to the OMP decarboxylase family.

The enzyme catalyses orotidine 5'-phosphate + H(+) = UMP + CO2. It participates in pyrimidine metabolism; UMP biosynthesis via de novo pathway; UMP from orotate: step 2/2. The chain is Orotidine 5'-phosphate decarboxylase (URA3) from Candida maltosa (Yeast).